A 276-amino-acid chain; its full sequence is NADPH-dependent 7-cyano-7-deazaguanine reductase (276 aa).

80-82 provides a ligand contact to substrate; sequence IES. 82–83 provides a ligand contact to NADPH; sequence SK. The active-site Thioimide intermediate is the Cys-178. Asp-185 acts as the Proton donor in catalysis. Position 217 to 218 (217 to 218) interacts with substrate; sequence HE. Residue 246-247 coordinates NADPH; sequence RG.

Belongs to the GTP cyclohydrolase I family. QueF type 2 subfamily. Homodimer.

It localises to the cytoplasm. The enzyme catalyses 7-aminomethyl-7-carbaguanine + 2 NADP(+) = 7-cyano-7-deazaguanine + 2 NADPH + 3 H(+). Its pathway is tRNA modification; tRNA-queuosine biosynthesis. In terms of biological role, catalyzes the NADPH-dependent reduction of 7-cyano-7-deazaguanine (preQ0) to 7-aminomethyl-7-deazaguanine (preQ1). This Teredinibacter turnerae (strain ATCC 39867 / T7901) protein is NADPH-dependent 7-cyano-7-deazaguanine reductase.